Reading from the N-terminus, the 293-residue chain is ATP synthase gamma chain (293 aa).

Belongs to the ATPase gamma chain family. In terms of assembly, F-type ATPases have 2 components, CF(1) - the catalytic core - and CF(0) - the membrane proton channel. CF(1) has five subunits: alpha(3), beta(3), gamma(1), delta(1), epsilon(1). CF(0) has three main subunits: a, b and c.

Its subcellular location is the cell inner membrane. Its function is as follows. Produces ATP from ADP in the presence of a proton gradient across the membrane. The gamma chain is believed to be important in regulating ATPase activity and the flow of protons through the CF(0) complex. The sequence is that of ATP synthase gamma chain from Psychrobacter sp. (strain PRwf-1).